The primary structure comprises 459 residues: Vanillin aminotransferase (459 aa).

Pyridoxal 5'-phosphate is bound by residues glycine 115–serine 116 and aspartate 255. Lysine 284 is subject to N6-(pyridoxal phosphate)lysine. Phenylalanine 320 to threonine 321 serves as a coordination point for pyridoxal 5'-phosphate. A coiled-coil region spans residues leucine 428–lysine 459.

The protein belongs to the class-III pyridoxal-phosphate-dependent aminotransferase family. As to expression, expressed in placental tissue of immature fruit.

The catalysed reaction is vanillin + L-alanine = vanillylamine + pyruvate. Its pathway is aromatic compound metabolism; phenylpropanoid biosynthesis. Involved in the biosynthesis of capsaicinoids natural products, pungent alkaloids synthesized from phenylpropanoid intermediates in the placental tissue of chili pepper fruit acting as repellant on herbivorous mammals and conferring spiciness to hot peppers. Can transfer an amine from vanillylamine to pyruvate forming vanillin and L-alanine. Can use pyruvate or oxaloacetate, but not 2-oxoglutarate as amino group acceptors. Is able to convert (S)-1-phenylethylamine into acetophenone in vitro. The polypeptide is Vanillin aminotransferase (Capsicum chinense (Scotch bonnet)).